Reading from the N-terminus, the 60-residue chain is Large ribosomal subunit protein bL32 (60 aa).

Residues 1–16 (MAVPKRKTTPSKRGMR) show a composition bias toward basic residues. The interval 1 to 34 (MAVPKRKTTPSKRGMRRAHDALSSPVYIEDKDSG) is disordered.

It belongs to the bacterial ribosomal protein bL32 family.

The polypeptide is Large ribosomal subunit protein bL32 (Maricaulis maris (strain MCS10) (Caulobacter maris)).